The following is a 329-amino-acid chain: D-alanine--D-alanine ligase (329 aa).

The ATP-grasp domain occupies 120–326; that stretch reads KLWYDAIGIP…FHEFLADCIN (207 aa). 150–205 contacts ATP; it reads AFDKWGKVFVKAARQGSSVGCYSVTNKQSVSQAVNDAFGYSEQVLVEKSVKPRELE. The Mg(2+) site is built by aspartate 280, glutamate 293, and asparagine 295.

This sequence belongs to the D-alanine--D-alanine ligase family. Requires Mg(2+) as cofactor. Mn(2+) serves as cofactor.

It localises to the cytoplasm. The catalysed reaction is 2 D-alanine + ATP = D-alanyl-D-alanine + ADP + phosphate + H(+). It participates in cell wall biogenesis; peptidoglycan biosynthesis. Its function is as follows. Cell wall formation. The chain is D-alanine--D-alanine ligase from Vibrio campbellii (strain ATCC BAA-1116).